Reading from the N-terminus, the 197-residue chain is FMN-dependent NADH:quinone oxidoreductase (197 aa).

Residue serine 10 participates in FMN binding.

This sequence belongs to the azoreductase type 1 family. Homodimer. FMN is required as a cofactor.

It catalyses the reaction 2 a quinone + NADH + H(+) = 2 a 1,4-benzosemiquinone + NAD(+). The enzyme catalyses N,N-dimethyl-1,4-phenylenediamine + anthranilate + 2 NAD(+) = 2-(4-dimethylaminophenyl)diazenylbenzoate + 2 NADH + 2 H(+). Its function is as follows. Quinone reductase that provides resistance to thiol-specific stress caused by electrophilic quinones. In terms of biological role, also exhibits azoreductase activity. Catalyzes the reductive cleavage of the azo bond in aromatic azo compounds to the corresponding amines. This Mycoplasma pneumoniae (strain ATCC 29342 / M129 / Subtype 1) (Mycoplasmoides pneumoniae) protein is FMN-dependent NADH:quinone oxidoreductase.